A 319-amino-acid polypeptide reads, in one-letter code: Ubiquinone biosynthesis protein COQ4, mitochondrial (319 aa).

The transit peptide at Met1–Ala28 directs the protein to the mitochondrion. Zn(2+) is bound by residues His205, Asp206, His209, and Glu221.

Belongs to the COQ4 family. As to quaternary structure, component of a multi-subunit COQ enzyme complex, composed of at least COQ3, COQ4, COQ5, COQ6, COQ7 and COQ9. The cofactor is Zn(2+).

The protein localises to the mitochondrion inner membrane. It carries out the reaction a 4-hydroxy-3-methoxy-5-(all-trans-polyprenyl)benzoate + H(+) = a 2-methoxy-6-(all-trans-polyprenyl)phenol + CO2. Its pathway is cofactor biosynthesis; ubiquinone biosynthesis. Functionally, lyase that catalyzes the C1-decarboxylation of 4-hydroxy-3-methoxy-5-(all-trans-polyprenyl)benzoic acid into 2-methoxy-6-(all-trans-polyprenyl)phenol during ubiquinone biosynthesis. The sequence is that of Ubiquinone biosynthesis protein COQ4, mitochondrial from Clavispora lusitaniae (strain ATCC 42720) (Yeast).